Consider the following 113-residue polypeptide: UPF0102 protein Ccon26_01140 (113 aa).

The protein belongs to the UPF0102 family.

In Campylobacter concisus (strain 13826), this protein is UPF0102 protein Ccon26_01140.